A 357-amino-acid polypeptide reads, in one-letter code: CD4+ T-cell-stimulating antigen (357 aa).

Residues 1–22 form the signal peptide; it reads MKKRTFALALSMIIASGVILGA. A lipid anchor (N-palmitoyl cysteine) is attached at Cys-23. Residue Cys-23 is the site of S-diacylglycerol cysteine attachment.

The protein belongs to the BMP lipoprotein family.

The protein resides in the cell membrane. The protein is CD4+ T-cell-stimulating antigen (tcsA) of Listeria monocytogenes serovar 1/2a (strain ATCC BAA-679 / EGD-e).